We begin with the raw amino-acid sequence, 225 residues long: Prolactin (225 aa).

An N-terminal signal peptide occupies residues 1-28 (MTIQGSDRKGTLLLLVMSNLLFCQNVHP). Residues cysteine 32 and cysteine 37 are joined by a disulfide bond. Residues serine 52 and serine 116 each carry the phosphoserine modification. 2 disulfide bridges follow: cysteine 84-cysteine 200 and cysteine 217-cysteine 225.

The protein belongs to the somatotropin/prolactin family. Interacts with PRLR.

It localises to the secreted. Prolactin acts primarily on the mammary gland by promoting lactation. The sequence is that of Prolactin (PRL) from Alexandromys montebelli (Japanese grass vole).